The following is a 265-amino-acid chain: Type III pantothenate kinase (265 aa).

9 to 16 (DAGNSRIK) contacts ATP. Substrate is bound by residues Tyr-96 and 103–106 (GSDR). Asp-105 (proton acceptor) is an active-site residue. ATP is bound at residue Thr-129. Thr-189 provides a ligand contact to substrate.

Belongs to the type III pantothenate kinase family. As to quaternary structure, homodimer. It depends on NH4(+) as a cofactor. K(+) serves as cofactor.

The protein localises to the cytoplasm. The enzyme catalyses (R)-pantothenate + ATP = (R)-4'-phosphopantothenate + ADP + H(+). It functions in the pathway cofactor biosynthesis; coenzyme A biosynthesis; CoA from (R)-pantothenate: step 1/5. Its function is as follows. Catalyzes the phosphorylation of pantothenate (Pan), the first step in CoA biosynthesis. In Burkholderia orbicola (strain AU 1054), this protein is Type III pantothenate kinase.